Consider the following 204-residue polypeptide: Signal peptidase I (204 aa).

The Cytoplasmic segment spans residues 1 to 10; sequence MNSFKNFLKE. The chain crosses the membrane as a helical span at residues 11–30; sequence WGLFLLILSLLALSRIFFWS. Residues 31-204 are Extracellular-facing; the sequence is NVRVEGHSMD…LWPITRIGTF (174 aa). Residues Ser-38 and Lys-76 contribute to the active site.

The protein belongs to the peptidase S26 family.

Its subcellular location is the cell membrane. It carries out the reaction Cleavage of hydrophobic, N-terminal signal or leader sequences from secreted and periplasmic proteins.. The chain is Signal peptidase I (lepB) from Streptococcus pneumoniae serotype 4 (strain ATCC BAA-334 / TIGR4).